Here is a 325-residue protein sequence, read N- to C-terminus: Beta-ketoacyl-[acyl-carrier-protein] synthase III (325 aa).

Residues cysteine 119 and histidine 252 contribute to the active site. The interval 253 to 257 (QANIR) is ACP-binding. Asparagine 282 is a catalytic residue.

The protein belongs to the thiolase-like superfamily. FabH family. As to quaternary structure, homodimer.

The protein localises to the cytoplasm. The enzyme catalyses malonyl-[ACP] + acetyl-CoA + H(+) = 3-oxobutanoyl-[ACP] + CO2 + CoA. The protein operates within lipid metabolism; fatty acid biosynthesis. Functionally, catalyzes the condensation reaction of fatty acid synthesis by the addition to an acyl acceptor of two carbons from malonyl-ACP. Catalyzes the first condensation reaction which initiates fatty acid synthesis and may therefore play a role in governing the total rate of fatty acid production. Possesses both acetoacetyl-ACP synthase and acetyl transacylase activities. Its substrate specificity determines the biosynthesis of branched-chain and/or straight-chain of fatty acids. The chain is Beta-ketoacyl-[acyl-carrier-protein] synthase III from Variovorax paradoxus (strain S110).